The chain runs to 653 residues: MSETNQVQNHAFASDNAKILQLMIHSLYSNKEIFLRELVSNAADAADKLRFKALSDNTLYENDGDLRVRVSCDKENNTLTISDNGIGMNVDEVIEHLGTIAKSGTAEFFSQLSGDQASDSQLIGQFGVGFYSAFIVADKVTVRTRKAGDSATDGVEWISAGEGEFTTAKIEKTNRGTDIILHLKEDESEYADDWRLKSIVTKYSDHISVSVEMLTAEVPAVEAVAEVTDEKDNVTRPAADAVDAIPALWEPVNKATALWTREKADITDEEYKEFYKHVSHDFGDPLLWEHNRVEGKTEYTSLLYVPTKAPFDMYNREKQHGLKLFVQRVFIMDDAEQFMPTYLRFVKGLLDSNDLPLNVSREILQDNKVTQAIRKGCTKRVLKMLEKLGNKDADKYQGFWDEFGQVLKEGPAEDHANKEQVAGLLRFASTHEDSTTQNVSLASYIERMKEGQDKIYFVVADSFEAAKNSPHLEVFRKKGIEVLLMSDRIDEWLVSHLTEFDGKQLQSVTRGGLDLGDMDDAETKEAQEKLEKEYDSVVKRIKASLDGKVKEVKLSQRLTDSPACIVADDDDMSSQMAKLMASVGQEVPDTLPIFEINGEHALVKHVADEQDDDMFNQWVEVLFEQAMLAERGSLKDPASFVSRLNKLMLSLTK.

Residues 1–361 form an a; substrate-binding region; the sequence is MSETNQVQNH…SNDLPLNVSR (361 aa). A b region spans residues 362-578; sequence EILQDNKVTQ…DDDMSSQMAK (217 aa). Residues 579-653 are c; that stretch reads LMASVGQEVP…LNKLMLSLTK (75 aa).

Belongs to the heat shock protein 90 family. Homodimer.

The protein localises to the cytoplasm. In terms of biological role, molecular chaperone. Has ATPase activity. This Colwellia psychrerythraea (strain 34H / ATCC BAA-681) (Vibrio psychroerythus) protein is Chaperone protein HtpG.